The sequence spans 263 residues: Small ribosomal subunit protein eS4 (263 aa).

The 63-residue stretch at 42 to 104 (LPLIVFLRNR…TGEHFRLVYD (63 aa)) folds into the S4 RNA-binding domain.

This sequence belongs to the eukaryotic ribosomal protein eS4 family.

The sequence is that of Small ribosomal subunit protein eS4 (RPS4Y1) from Pongo pygmaeus (Bornean orangutan).